The chain runs to 185 residues: Ribosome-recycling factor (185 aa).

The protein belongs to the RRF family.

Its subcellular location is the cytoplasm. Its function is as follows. Responsible for the release of ribosomes from messenger RNA at the termination of protein biosynthesis. May increase the efficiency of translation by recycling ribosomes from one round of translation to another. This is Ribosome-recycling factor from Syntrophobacter fumaroxidans (strain DSM 10017 / MPOB).